The primary structure comprises 312 residues: Ribose-phosphate pyrophosphokinase (312 aa).

ATP-binding positions include 38 to 40 and 97 to 98; these read DGE and RQ. H131 and D170 together coordinate Mg(2+). K193 is an active-site residue. D-ribose 5-phosphate is bound by residues R195, D219, and 223–227; that span reads DTAGT.

Belongs to the ribose-phosphate pyrophosphokinase family. Class I subfamily. In terms of assembly, homohexamer. Mg(2+) serves as cofactor.

Its subcellular location is the cytoplasm. The enzyme catalyses D-ribose 5-phosphate + ATP = 5-phospho-alpha-D-ribose 1-diphosphate + AMP + H(+). It participates in metabolic intermediate biosynthesis; 5-phospho-alpha-D-ribose 1-diphosphate biosynthesis; 5-phospho-alpha-D-ribose 1-diphosphate from D-ribose 5-phosphate (route I): step 1/1. Its function is as follows. Involved in the biosynthesis of the central metabolite phospho-alpha-D-ribosyl-1-pyrophosphate (PRPP) via the transfer of pyrophosphoryl group from ATP to 1-hydroxyl of ribose-5-phosphate (Rib-5-P). The polypeptide is Ribose-phosphate pyrophosphokinase (Leptospira interrogans serogroup Icterohaemorrhagiae serovar copenhageni (strain Fiocruz L1-130)).